The chain runs to 21 residues: Trypsin (21 aa).

The propeptide at 1–7 (FPIEEDK) is activation peptide. One can recognise a Peptidase S1 domain in the interval 8–21 (IVGGYECPKHXVPW).

Belongs to the peptidase S1 family.

Its subcellular location is the secreted. The protein localises to the extracellular space. It catalyses the reaction Preferential cleavage: Arg-|-Xaa, Lys-|-Xaa.. The polypeptide is Trypsin (Protopterus aethiopicus (Marbled lungfish)).